The following is a 156-amino-acid chain: Small ribosomal subunit protein uS7 (156 aa).

Belongs to the universal ribosomal protein uS7 family. In terms of assembly, part of the 30S ribosomal subunit. Contacts proteins S9 and S11.

Its function is as follows. One of the primary rRNA binding proteins, it binds directly to 16S rRNA where it nucleates assembly of the head domain of the 30S subunit. Is located at the subunit interface close to the decoding center, probably blocks exit of the E-site tRNA. This Geobacter sp. (strain M21) protein is Small ribosomal subunit protein uS7.